We begin with the raw amino-acid sequence, 330 residues long: DNA-directed RNA polymerase subunit alpha (330 aa).

Residues 1–236 (MQGSVTEFLK…EQLDAFVDLR (236 aa)) form an alpha N-terminal domain (alpha-NTD) region. An alpha C-terminal domain (alpha-CTD) region spans residues 250-330 (FDPILLRPVD…NWPPASIAED (81 aa)).

It belongs to the RNA polymerase alpha chain family. In terms of assembly, homodimer. The RNAP catalytic core consists of 2 alpha, 1 beta, 1 beta' and 1 omega subunit. When a sigma factor is associated with the core the holoenzyme is formed, which can initiate transcription.

It carries out the reaction RNA(n) + a ribonucleoside 5'-triphosphate = RNA(n+1) + diphosphate. Functionally, DNA-dependent RNA polymerase catalyzes the transcription of DNA into RNA using the four ribonucleoside triphosphates as substrates. The chain is DNA-directed RNA polymerase subunit alpha from Vibrio cholerae serotype O1 (strain ATCC 39315 / El Tor Inaba N16961).